The primary structure comprises 310 residues: 4-diphosphocytidyl-2-C-methyl-D-erythritol kinase (310 aa).

K11 is a catalytic residue. 95–105 contributes to the ATP binding site; that stretch reads PIGAGLAGGSA. D137 is an active-site residue.

It belongs to the GHMP kinase family. IspE subfamily.

It carries out the reaction 4-CDP-2-C-methyl-D-erythritol + ATP = 4-CDP-2-C-methyl-D-erythritol 2-phosphate + ADP + H(+). It functions in the pathway isoprenoid biosynthesis; isopentenyl diphosphate biosynthesis via DXP pathway; isopentenyl diphosphate from 1-deoxy-D-xylulose 5-phosphate: step 3/6. Catalyzes the phosphorylation of the position 2 hydroxy group of 4-diphosphocytidyl-2C-methyl-D-erythritol. This Acaryochloris marina (strain MBIC 11017) protein is 4-diphosphocytidyl-2-C-methyl-D-erythritol kinase.